Here is a 97-residue protein sequence, read N- to C-terminus: UPF0250 protein HD_2015 (97 aa).

The protein belongs to the UPF0250 family.

This chain is UPF0250 protein HD_2015, found in Haemophilus ducreyi (strain 35000HP / ATCC 700724).